A 681-amino-acid chain; its full sequence is Long-chain-fatty-acid--CoA ligase heimdall (681 aa).

ATP-binding positions include Thr-223–Lys-231, Glu-414–Ser-419, Asp-491, Arg-506, and Lys-639.

It belongs to the ATP-dependent AMP-binding enzyme family. Bubblegum subfamily.

The enzyme catalyses a long-chain fatty acid + ATP + CoA = a long-chain fatty acyl-CoA + AMP + diphosphate. Its function is as follows. Mediates activation of long-chain fatty acids for both synthesis of cellular lipids, and degradation via beta-oxidation. Probably by regulating lipid storage and catabolism, plays a role in neuronal function. This Drosophila melanogaster (Fruit fly) protein is Long-chain-fatty-acid--CoA ligase heimdall.